Reading from the N-terminus, the 583-residue chain is Aspartate--tRNA(Asp/Asn) ligase (583 aa).

Glu171 provides a ligand contact to L-aspartate. Residues 195-198 (QLFK) are aspartate. Arg217 is an L-aspartate binding site. Residues 217–219 (RDE) and Gln226 each bind ATP. Residue His443 participates in L-aspartate binding. Residue Glu476 participates in ATP binding. An L-aspartate-binding site is contributed by Arg483. 528 to 531 (GLDR) serves as a coordination point for ATP.

This sequence belongs to the class-II aminoacyl-tRNA synthetase family. Type 1 subfamily. Homodimer.

It is found in the cytoplasm. The enzyme catalyses tRNA(Asx) + L-aspartate + ATP = L-aspartyl-tRNA(Asx) + AMP + diphosphate. In terms of biological role, aspartyl-tRNA synthetase with relaxed tRNA specificity since it is able to aspartylate not only its cognate tRNA(Asp) but also tRNA(Asn). Reaction proceeds in two steps: L-aspartate is first activated by ATP to form Asp-AMP and then transferred to the acceptor end of tRNA(Asp/Asn). In Ruthia magnifica subsp. Calyptogena magnifica, this protein is Aspartate--tRNA(Asp/Asn) ligase.